We begin with the raw amino-acid sequence, 474 residues long: Nitrogenase vanadium-iron protein alpha chain (474 aa).

Residues Cys-49, Cys-75, and Cys-138 each coordinate [8Fe-7S] cluster. 2 residues coordinate [7Fe-V-9S-C-homocitryl] cluster: Cys-257 and His-423.

Belongs to the NifD/NifK/NifE/NifN family. In terms of assembly, hexamer of two alpha, two beta, and two delta chains. The cofactor is [8Fe-7S] cluster. [7Fe-V-9S-C-homocitryl] cluster serves as cofactor.

The enzyme catalyses N2 + 8 reduced [2Fe-2S]-[ferredoxin] + 16 ATP + 16 H2O = H2 + 8 oxidized [2Fe-2S]-[ferredoxin] + 2 NH4(+) + 16 ADP + 16 phosphate + 6 H(+). This vanadium-iron protein is part of the nitrogenase complex that catalyzes the key enzymatic reactions in nitrogen fixation. In Azotobacter vinelandii, this protein is Nitrogenase vanadium-iron protein alpha chain (vnfD).